The sequence spans 324 residues: Cuticle collagen sqt-1 (324 aa).

Disordered stretches follow at residues 68–108 (RRQY…TPNG) and 129–324 (SGPK…YRNI). The span at 87-97 (SAPPGQPPAVP) shows a compositional bias: pro residues. Triple-helical region stretches follow at residues 127 to 153 (GPSG…PGVG), 171 to 231 (QGPV…KGRD), and 237 to 299 (GRPG…PGKD). Composition is skewed to low complexity over residues 129–156 (SGPK…GADD) and 177–201 (PGAL…PGRD). A compositionally biased stretch (basic and acidic residues) spans 227–236 (EKGRDAEHPI).

Belongs to the cuticular collagen family. In terms of assembly, collagen polypeptide chains are complexed within the cuticle by disulfide bonds and other types of covalent cross-links.

Functionally, nematode cuticles are composed largely of collagen-like proteins. The cuticle functions both as an exoskeleton and as a barrier to protect the worm from its environment. This is a collagen critical for organismal morphogenesis. Mutations in sqt-1 can lengthen, shorten, or helically twist the entire animal. This Caenorhabditis elegans protein is Cuticle collagen sqt-1 (sqt-1).